The following is a 462-amino-acid chain: Arginine biosynthesis bifunctional protein ArgJ, mitochondrial (462 aa).

Threonine 189, lysine 215, threonine 236, glutamate 327, asparagine 457, and serine 462 together coordinate substrate. The active-site Nucleophile is the threonine 236.

It belongs to the ArgJ family. As to quaternary structure, heterodimer of an alpha and a beta chain. Post-translationally, the alpha and beta chains are autoproteolytically processed from a single precursor protein within the mitochondrion.

Its subcellular location is the mitochondrion matrix. The enzyme catalyses N(2)-acetyl-L-ornithine + L-glutamate = N-acetyl-L-glutamate + L-ornithine. It catalyses the reaction L-glutamate + acetyl-CoA = N-acetyl-L-glutamate + CoA + H(+). It participates in amino-acid biosynthesis; L-arginine biosynthesis; L-ornithine and N-acetyl-L-glutamate from L-glutamate and N(2)-acetyl-L-ornithine (cyclic): step 1/1. Its pathway is amino-acid biosynthesis; L-arginine biosynthesis; N(2)-acetyl-L-ornithine from L-glutamate: step 1/4. Its function is as follows. Catalyzes two activities which are involved in the cyclic version of arginine biosynthesis: the synthesis of acetylglutamate from glutamate and acetyl-CoA, and of ornithine by transacetylation between acetylornithine and glutamate. The sequence is that of Arginine biosynthesis bifunctional protein ArgJ, mitochondrial from Postia placenta (strain ATCC 44394 / Madison 698-R) (Brown rot fungus).